The primary structure comprises 219 residues: 2-C-methyl-D-erythritol 4-phosphate cytidylyltransferase (219 aa).

Belongs to the IspD/TarI cytidylyltransferase family. IspD subfamily.

It carries out the reaction 2-C-methyl-D-erythritol 4-phosphate + CTP + H(+) = 4-CDP-2-C-methyl-D-erythritol + diphosphate. Its pathway is isoprenoid biosynthesis; isopentenyl diphosphate biosynthesis via DXP pathway; isopentenyl diphosphate from 1-deoxy-D-xylulose 5-phosphate: step 2/6. In terms of biological role, catalyzes the formation of 4-diphosphocytidyl-2-C-methyl-D-erythritol from CTP and 2-C-methyl-D-erythritol 4-phosphate (MEP). The protein is 2-C-methyl-D-erythritol 4-phosphate cytidylyltransferase of Phocaeicola vulgatus (strain ATCC 8482 / DSM 1447 / JCM 5826 / CCUG 4940 / NBRC 14291 / NCTC 11154) (Bacteroides vulgatus).